The primary structure comprises 406 residues: Argininosuccinate synthase (406 aa).

Residues A12–S20 and A39 each bind ATP. Residues Y90 and S95 each coordinate L-citrulline. G120 is a binding site for ATP. T122, N126, and D127 together coordinate L-aspartate. N126 contributes to the L-citrulline binding site. Positions 130, 179, 188, 264, and 276 each coordinate L-citrulline.

It belongs to the argininosuccinate synthase family. Type 1 subfamily. Homotetramer.

It localises to the cytoplasm. It carries out the reaction L-citrulline + L-aspartate + ATP = 2-(N(omega)-L-arginino)succinate + AMP + diphosphate + H(+). It participates in amino-acid biosynthesis; L-arginine biosynthesis; L-arginine from L-ornithine and carbamoyl phosphate: step 2/3. The protein is Argininosuccinate synthase of Geotalea daltonii (strain DSM 22248 / JCM 15807 / FRC-32) (Geobacter daltonii).